The sequence spans 591 residues: CTP synthase (591 aa).

The amidoligase domain stretch occupies residues 1–281 (MPQSRTHSRT…DAYVVRQLGL (281 aa)). Ser23 contributes to the CTP binding site. Ser23 serves as a coordination point for UTP. ATP-binding positions include 24-29 (SLGKGL) and Asp81. The Mg(2+) site is built by Asp81 and Glu155. CTP is bound by residues 162–164 (DIE), 202–207 (KTKPTQ), and Lys238. Residues 202-207 (KTKPTQ) and Lys238 each bind UTP. The Glutamine amidotransferase type-1 domain maps to 306–554 (RIALVGKYVD…VDAALKHKLE (249 aa)). Residue Gly369 coordinates L-glutamine. The Nucleophile; for glutamine hydrolysis role is filled by Cys396. Residues 397–400 (LGLQ), Glu419, and Arg480 each bind L-glutamine. Active-site residues include His527 and Glu529. A disordered region spans residues 568–591 (AVATDDELADSADRDEVASVDSAG).

Belongs to the CTP synthase family. In terms of assembly, homotetramer.

It carries out the reaction UTP + L-glutamine + ATP + H2O = CTP + L-glutamate + ADP + phosphate + 2 H(+). It catalyses the reaction L-glutamine + H2O = L-glutamate + NH4(+). The catalysed reaction is UTP + NH4(+) + ATP = CTP + ADP + phosphate + 2 H(+). It functions in the pathway pyrimidine metabolism; CTP biosynthesis via de novo pathway; CTP from UDP: step 2/2. Its activity is regulated as follows. Allosterically activated by GTP, when glutamine is the substrate; GTP has no effect on the reaction when ammonia is the substrate. The allosteric effector GTP functions by stabilizing the protein conformation that binds the tetrahedral intermediate(s) formed during glutamine hydrolysis. Inhibited by the product CTP, via allosteric rather than competitive inhibition. Catalyzes the ATP-dependent amination of UTP to CTP with either L-glutamine or ammonia as the source of nitrogen. Regulates intracellular CTP levels through interactions with the four ribonucleotide triphosphates. This Rhodococcus jostii (strain RHA1) protein is CTP synthase.